A 1495-amino-acid chain; its full sequence is Pregnancy zone protein (1495 aa).

The first 24 residues, 1-24 (MRRNQLPTPAFLLLFLLLPRDATT), serve as a signal peptide directing secretion. Cysteine 48 and cysteine 86 form a disulfide bridge. 2 N-linked (GlcNAc...) asparagine glycosylation sites follow: asparagine 55 and asparagine 157. 2 disulfides stabilise this stretch: cysteine 249–cysteine 298 and cysteine 267–cysteine 286. Residues asparagine 382, asparagine 405, and asparagine 412 are each glycosylated (N-linked (GlcNAc...) asparagine). An intrachain disulfide couples cysteine 469 to cysteine 562. N-linked (GlcNAc...) asparagine glycosylation occurs at asparagine 568. Intrachain disulfides connect cysteine 594-cysteine 783, cysteine 642-cysteine 689, cysteine 833-cysteine 861, cysteine 859-cysteine 895, cysteine 933-cysteine 1339, and cysteine 1092-cysteine 1140. Residues 686–744 (PRFCQEFQHYPAMGGVAPQALAVAASGPGSSFRAMGVPMMGLDYSDEINQVVEVRETVR) are bait region. 2 N-linked (GlcNAc...) asparagine glycosylation sites follow: asparagine 881 and asparagine 942. Residues 984-987 (CGEQ) constitute a cross-link (isoglutamyl cysteine thioester (Cys-Gln)). Residue asparagine 1003 is glycosylated (N-linked (GlcNAc...) asparagine). N-linked (GlcNAc...) asparagine glycosylation is found at asparagine 1385 and asparagine 1443.

Belongs to the protease inhibitor I39 (alpha-2-macroglobulin) family. In terms of tissue distribution, highest expression in liver, medium expression in ovary, heart and stomach. Low expression in lung, kidney and uterus. Protein found in plasma.

The protein resides in the secreted. Is able to inhibit all four classes of proteinases by a unique 'trapping' mechanism. This protein has a peptide stretch, called the 'bait region' which contains specific cleavage sites for different proteinases. When a proteinase cleaves the bait region, a conformational change is induced in the protein which traps the proteinase. The entrapped enzyme remains active against low molecular weight substrates (activity against high molecular weight substrates is greatly reduced). Following cleavage in the bait region, a thioester bond is hydrolyzed and mediates the covalent binding of the protein to the proteinase. The protein is Pregnancy zone protein (Pzp) of Mus musculus (Mouse).